Here is a 488-residue protein sequence, read N- to C-terminus: Replication-associated protein (488 aa).

Positions 462–488 (PRPRQMQRSATEHNLFQYARSGRDPTS) are disordered.

The protein localises to the host nucleus. Plays an essential for the replication of viral DNA. Presumably cleaves viral genomic dsRNA replicative form to initiate rolling circle replication. The chain is Replication-associated protein from Chaetoceros diatodnavirus 1 (Chaetoceros setoense DNA virus).